The chain runs to 403 residues: Tryptophan synthase beta chain 1 (403 aa).

K93 carries the N6-(pyridoxal phosphate)lysine modification.

Belongs to the TrpB family. As to quaternary structure, tetramer of two alpha and two beta chains. Pyridoxal 5'-phosphate serves as cofactor.

It catalyses the reaction (1S,2R)-1-C-(indol-3-yl)glycerol 3-phosphate + L-serine = D-glyceraldehyde 3-phosphate + L-tryptophan + H2O. It participates in amino-acid biosynthesis; L-tryptophan biosynthesis; L-tryptophan from chorismate: step 5/5. Its function is as follows. The beta subunit is responsible for the synthesis of L-tryptophan from indole and L-serine. The protein is Tryptophan synthase beta chain 1 (trpB1) of Methanosarcina acetivorans (strain ATCC 35395 / DSM 2834 / JCM 12185 / C2A).